The chain runs to 273 residues: Putative pyruvate, phosphate dikinase regulatory protein (273 aa).

Residue 153 to 160 participates in ADP binding; it reads GVSRTSKS.

Belongs to the pyruvate, phosphate/water dikinase regulatory protein family. PDRP subfamily.

The enzyme catalyses N(tele)-phospho-L-histidyl/L-threonyl-[pyruvate, phosphate dikinase] + ADP = N(tele)-phospho-L-histidyl/O-phospho-L-threonyl-[pyruvate, phosphate dikinase] + AMP + H(+). The catalysed reaction is N(tele)-phospho-L-histidyl/O-phospho-L-threonyl-[pyruvate, phosphate dikinase] + phosphate + H(+) = N(tele)-phospho-L-histidyl/L-threonyl-[pyruvate, phosphate dikinase] + diphosphate. In terms of biological role, bifunctional serine/threonine kinase and phosphorylase involved in the regulation of the pyruvate, phosphate dikinase (PPDK) by catalyzing its phosphorylation/dephosphorylation. In Ehrlichia ruminantium (strain Welgevonden), this protein is Putative pyruvate, phosphate dikinase regulatory protein.